A 461-amino-acid polypeptide reads, in one-letter code: Phosphoglucosamine mutase (461 aa).

Residue Ser-113 is the Phosphoserine intermediate of the active site. Ser-113, Asp-251, Asp-253, and Asp-255 together coordinate Mg(2+). Phosphoserine is present on Ser-113.

The protein belongs to the phosphohexose mutase family. Mg(2+) serves as cofactor. Post-translationally, activated by phosphorylation.

It catalyses the reaction alpha-D-glucosamine 1-phosphate = D-glucosamine 6-phosphate. Functionally, catalyzes the conversion of glucosamine-6-phosphate to glucosamine-1-phosphate. The polypeptide is Phosphoglucosamine mutase (Prochlorococcus marinus (strain SARG / CCMP1375 / SS120)).